Consider the following 265-residue polypeptide: Arcelin-1 (265 aa).

The signal sequence occupies residues 1-21 (MASSNLLTLALFLVLLTHANS). N-linked (GlcNAc...) asparagine glycans are attached at residues asparagine 33, asparagine 89, and asparagine 128. Cysteine 165 and cysteine 201 are disulfide-bonded.

This sequence belongs to the leguminous lectin family. As to quaternary structure, homodimer.

In terms of biological role, seed storage. This carbohydrate-binding lectin has toxic effects on an important bean bruchid pest, Z.subfasciatus. Antibiosis properties of legume lectins are proposed to be due to the lysis of epithelial cells of the intestine by binding to the carbohydrate moieties of these proteins. This chain is Arcelin-1 (ARC1), found in Phaseolus vulgaris (Kidney bean).